The chain runs to 596 residues: Nuclear receptor subfamily 2 group C member 2 (596 aa).

Ser19 bears the Phosphoserine; by MAPK mark. At Ser46 the chain carries Phosphoserine. Residues Ser55 and Ser68 each carry the phosphoserine; by MAPK modification. Ser98 carries the post-translational modification Phosphoserine. Positions 114-189 (VEYCVVCGDK…MGMKMESVQS (76 aa)) form a DNA-binding region, nuclear receptor. NR C4-type zinc fingers lie at residues 117–137 (CVVC…CEGC) and 153–177 (CRSS…LKKC). Residue Lys192 forms a Glycyl lysine isopeptide (Lys-Gly) (interchain with G-Cter in SUMO2) linkage. The residue at position 219 (Ser219) is a Phosphoserine. N6-acetyllysine is present on Lys231. In terms of domain architecture, NR LBD spans 341-583 (GSIHVISRDQ…SIIPYILKME (243 aa)).

The protein belongs to the nuclear hormone receptor family. NR2 subfamily. As to quaternary structure, homodimer; can bind DNA as homodimer. Heterodimer; binds DNA as a heterodimer with NR2C1 required for chromatin remodeling and for binding to promoter regions such as globin DR1 repeats. Interacts with NR2C2AP; the interaction represses selective NR2C2-mediated transcriptional activity. Interacts with PCAF; the interaction preferentially occurs on the non-phosphorylated form and induces NR2C2-mediated transactivation activity and does not require the ligand-binding domain. Interacts (MAPK-mediated phosphorylated form) with NRIP1; the interaction promotes repression of NR2C2-mediated activity. Interacts with NLRP10. Interacts (via ligand-binding region) with transcriptional corepressor JAZF1; the interaction promotes NR2C2-mediated transcriptional repression. In terms of processing, phosphorylation on Ser-19 and Ser-68 is an important regulator of NR2C2-mediated transcriptional activity. Phosphorylation on these residues recruits the corepressor, NRIP1, leading to transcripional repression, whereas the non-phosphorylated form preferentially recruits the coactivator, PCAF. Expressed in hepatocytes. Also expressed in granule cells of the hippocampus and the cerebellum.

Its subcellular location is the nucleus. Its function is as follows. Orphan nuclear receptor that can act as a repressor or activator of transcription. An important repressor of nuclear receptor signaling pathways such as retinoic acid receptor, retinoid X, vitamin D3 receptor, thyroid hormone receptor and estrogen receptor pathways. May regulate gene expression during the late phase of spermatogenesis. Activates transcriptional activity of LHCG and is antagonist of PPARA-mediated transactivation. Together with NR2C1, forms the core of the DRED (direct repeat erythroid-definitive) complex that represses embryonic and fetal globin transcription including that of GATA1. Binds to hormone response elements (HREs) consisting of two 5'-AGGTCA-3' half site direct repeat consensus sequences. Plays a fundamental role in early embryonic development and embryonic stem cells. Required for normal spermatogenesis and cerebellum development. Appears to be important for neurodevelopmentally regulated behavior. This Rattus norvegicus (Rat) protein is Nuclear receptor subfamily 2 group C member 2 (Nr2c2).